The primary structure comprises 116 residues: Putative pterin-4-alpha-carbinolamine dehydratase (116 aa).

Belongs to the pterin-4-alpha-carbinolamine dehydratase family.

The enzyme catalyses (4aS,6R)-4a-hydroxy-L-erythro-5,6,7,8-tetrahydrobiopterin = (6R)-L-erythro-6,7-dihydrobiopterin + H2O. The protein is Putative pterin-4-alpha-carbinolamine dehydratase of Xylella fastidiosa (strain M23).